Reading from the N-terminus, the 151-residue chain is UPF0756 membrane protein Lreu_0946 (151 aa).

4 helical membrane-spanning segments follow: residues 4-24, 52-72, 77-97, and 115-135; these read WLFLALVLLIAIFGHNSSLII, WGVTVISVAILIPIATGQIGF, AAFKTPAGWIAVGMGIAVAIL, and LVLGTIIGVVAFKGIAAGPVI.

Belongs to the UPF0756 family.

Its subcellular location is the cell membrane. The sequence is that of UPF0756 membrane protein Lreu_0946 from Limosilactobacillus reuteri (strain DSM 20016) (Lactobacillus reuteri).